The following is a 236-amino-acid chain: Purine nucleoside phosphorylase DeoD-type (236 aa).

His-5 lines the a purine D-ribonucleoside pocket. Phosphate-binding positions include Gly-21, Arg-25, Arg-44, and 88–91 (RVGT). Residues 180 to 182 (EME) and 204 to 205 (SD) each bind a purine D-ribonucleoside. The Proton donor role is filled by Asp-205.

The protein belongs to the PNP/UDP phosphorylase family. As to quaternary structure, homohexamer; trimer of homodimers.

The enzyme catalyses a purine D-ribonucleoside + phosphate = a purine nucleobase + alpha-D-ribose 1-phosphate. It carries out the reaction a purine 2'-deoxy-D-ribonucleoside + phosphate = a purine nucleobase + 2-deoxy-alpha-D-ribose 1-phosphate. In terms of biological role, catalyzes the reversible phosphorolytic breakdown of the N-glycosidic bond in the beta-(deoxy)ribonucleoside molecules, with the formation of the corresponding free purine bases and pentose-1-phosphate. The protein is Purine nucleoside phosphorylase DeoD-type of Shewanella baltica (strain OS155 / ATCC BAA-1091).